Here is a 175-residue protein sequence, read N- to C-terminus: uncharacterized protein (175 aa).

The first 22 residues, 1–22 (MNRIVGILISILMLACIGVTMA), serve as a signal peptide directing secretion.

This is an uncharacterized protein from Archaeoglobus fulgidus (strain ATCC 49558 / DSM 4304 / JCM 9628 / NBRC 100126 / VC-16).